The following is a 170-amino-acid chain: Urease accessory protein UreE (170 aa).

A disordered region spans residues 137-170 (PFDPESGAYAHAGREQSHAHSHEHSHADGHTHAH). The segment covering 148–170 (AGREQSHAHSHEHSHADGHTHAH) has biased composition (basic and acidic residues).

This sequence belongs to the UreE family.

It localises to the cytoplasm. Its function is as follows. Involved in urease metallocenter assembly. Binds nickel. Probably functions as a nickel donor during metallocenter assembly. In Pseudoalteromonas translucida (strain TAC 125), this protein is Urease accessory protein UreE.